Reading from the N-terminus, the 115-residue chain is Regulator of ribonuclease activity B (115 aa).

This sequence belongs to the RraB family. In terms of assembly, interacts with the C-terminal region of Rne.

It localises to the cytoplasm. Globally modulates RNA abundance by binding to RNase E (Rne) and regulating its endonucleolytic activity. Can modulate Rne action in a substrate-dependent manner by altering the composition of the degradosome. The protein is Regulator of ribonuclease activity B of Aeromonas hydrophila subsp. hydrophila (strain ATCC 7966 / DSM 30187 / BCRC 13018 / CCUG 14551 / JCM 1027 / KCTC 2358 / NCIMB 9240 / NCTC 8049).